The chain runs to 383 residues: Acetylornithine deacetylase (383 aa).

His-80 contacts Zn(2+). Asp-82 is an active-site residue. Asp-112 serves as a coordination point for Zn(2+). Residue Glu-144 is part of the active site. Residues Glu-145, Glu-169, and His-355 each coordinate Zn(2+).

This sequence belongs to the peptidase M20A family. ArgE subfamily. Homodimer. Zn(2+) serves as cofactor. Requires Co(2+) as cofactor. The cofactor is glutathione.

The protein resides in the cytoplasm. It carries out the reaction N(2)-acetyl-L-ornithine + H2O = L-ornithine + acetate. It functions in the pathway amino-acid biosynthesis; L-arginine biosynthesis; L-ornithine from N(2)-acetyl-L-ornithine (linear): step 1/1. Its function is as follows. Catalyzes the hydrolysis of the amide bond of N(2)-acetylated L-amino acids. Cleaves the acetyl group from N-acetyl-L-ornithine to form L-ornithine, an intermediate in L-arginine biosynthesis pathway, and a branchpoint in the synthesis of polyamines. This chain is Acetylornithine deacetylase, found in Escherichia coli (strain K12 / MC4100 / BW2952).